The following is a 160-amino-acid chain: Protein cornichon homolog 2 (160 aa).

Residues 1 to 10 (MAFTFAAFCY) lie on the Cytoplasmic side of the membrane. The helical transmembrane segment at 11-31 (MLTLVLCAALIFFVIWQIIAF) threads the bilayer. The Lumenal segment spans residues 32–72 (DELRTDFKNPIDQSNPTRARERILNIERICNLLRRLVVPEY). Residues 73–93 (SIHGLFCLMFMCAGEWVTLGL) traverse the membrane as a helical segment. Topologically, residues 94 to 138 (NIPLLLYHLWRFFHRPADGSEVMYDPVSVMNADILNYCQKESWCK) are cytoplasmic. The chain crosses the membrane as a helical span at residues 139-159 (LGFYLLSFFYYLYSMVYALVS). A topological domain (lumenal) is located at residue phenylalanine 160.

It belongs to the cornichon family.

The protein localises to the membrane. Regulates the trafficking and gating properties of AMPA-selective glutamate receptors (AMPARs). The chain is Protein cornichon homolog 2 (cnih2) from Danio rerio (Zebrafish).